The sequence spans 418 residues: Glutamyl-tRNA reductase (418 aa).

Substrate-binding positions include 49 to 52 (TCNR), S106, 111 to 113 (EPQ), and Q117. Residue C50 is the Nucleophile of the active site. 186–191 (GAGEMI) is an NADP(+) binding site.

Belongs to the glutamyl-tRNA reductase family. As to quaternary structure, homodimer.

The catalysed reaction is (S)-4-amino-5-oxopentanoate + tRNA(Glu) + NADP(+) = L-glutamyl-tRNA(Glu) + NADPH + H(+). Its pathway is porphyrin-containing compound metabolism; protoporphyrin-IX biosynthesis; 5-aminolevulinate from L-glutamyl-tRNA(Glu): step 1/2. In terms of biological role, catalyzes the NADPH-dependent reduction of glutamyl-tRNA(Glu) to glutamate 1-semialdehyde (GSA). In Alcanivorax borkumensis (strain ATCC 700651 / DSM 11573 / NCIMB 13689 / SK2), this protein is Glutamyl-tRNA reductase.